The following is a 264-amino-acid chain: 3-methyl-2-oxobutanoate hydroxymethyltransferase (264 aa).

2 residues coordinate Mg(2+): Asp45 and Asp84. 3-methyl-2-oxobutanoate-binding positions include 45–46 (DS), Asp84, and Lys112. Residue Glu114 participates in Mg(2+) binding. Glu181 acts as the Proton acceptor in catalysis.

The protein belongs to the PanB family. Homodecamer; pentamer of dimers. Requires Mg(2+) as cofactor.

It is found in the cytoplasm. The enzyme catalyses 3-methyl-2-oxobutanoate + (6R)-5,10-methylene-5,6,7,8-tetrahydrofolate + H2O = 2-dehydropantoate + (6S)-5,6,7,8-tetrahydrofolate. The protein operates within cofactor biosynthesis; (R)-pantothenate biosynthesis; (R)-pantoate from 3-methyl-2-oxobutanoate: step 1/2. Functionally, catalyzes the reversible reaction in which hydroxymethyl group from 5,10-methylenetetrahydrofolate is transferred onto alpha-ketoisovalerate to form ketopantoate. In Shewanella frigidimarina (strain NCIMB 400), this protein is 3-methyl-2-oxobutanoate hydroxymethyltransferase.